Reading from the N-terminus, the 690-residue chain is Elongation factor G (690 aa).

The tr-type G domain occupies 8 to 283 (SKCRNIGIMA…AVVDYLPSPN (276 aa)). Residues 17–24 (AHIDAGKT), 81–85 (DTPGH), and 135–138 (NKMD) each bind GTP.

Belongs to the TRAFAC class translation factor GTPase superfamily. Classic translation factor GTPase family. EF-G/EF-2 subfamily.

Its subcellular location is the cytoplasm. Functionally, catalyzes the GTP-dependent ribosomal translocation step during translation elongation. During this step, the ribosome changes from the pre-translocational (PRE) to the post-translocational (POST) state as the newly formed A-site-bound peptidyl-tRNA and P-site-bound deacylated tRNA move to the P and E sites, respectively. Catalyzes the coordinated movement of the two tRNA molecules, the mRNA and conformational changes in the ribosome. This is Elongation factor G from Anaplasma phagocytophilum (strain HZ).